Consider the following 109-residue polypeptide: Thioredoxin 1 (109 aa).

The region spanning 2 to 109 (SDKIIHLTDD…LKEFLDANLA (108 aa)) is the Thioredoxin domain. Residues cysteine 33 and cysteine 36 each act as nucleophile in the active site. Cysteine 33 and cysteine 36 are disulfide-bonded. Lysine 70 carries the post-translational modification N6-acetyllysine.

This sequence belongs to the thioredoxin family. As to quaternary structure, monomer.

In terms of biological role, participates in various redox reactions through the reversible oxidation of its active center dithiol to a disulfide and catalyzes dithiol-disulfide exchange reactions. This chain is Thioredoxin 1 (trxA), found in Escherichia coli O157:H7.